We begin with the raw amino-acid sequence, 694 residues long: MEWGYLLEVTSLLAALALLQRSSGAAAASAKELACQEITVPLCKGIGYNYTYMPNQFNHDTQDEAGLEVHQFWPLVEIQCSPDLKFFLCSMYTPICLEDYKKPLPPCRSVCERAKAGCAPLMRQYGFAWPDRMRCDRLPEQGNPDTLCMDYNRTDLTTAAPSPPRRLPPPPPGEQPPSGSGHGRPPGARPPHRGGGRGGGGGDAAAPPARGGGGGGKARPPGGGAAPCEPGCQCRAPMVSVSSERHPLYNRVKTGQIANCALPCHNPFFSQDERAFTVFWIGLWSVLCFVSTFATVSTFLIDMERFKYPERPIIFLSACYLFVSVGYLVRLVAGHEKVACSGGAPGAGGAGGAGGAAAGAGAAGAGAGGPGGRGEYEELGAVEQHVRYETTGPALCTVVFLLVYFFGMASSIWWVILSLTWFLAAGMKWGNEAIAGYSQYFHLAAWLVPSVKSIAVLALSSVDGDPVAGICYVGNQSLDNLRGFVLAPLVIYLFIGTMFLLAGFVSLFRIRSVIKQQDGPTKTHKLEKLMIRLGLFTVLYTVPAAVVVACLFYEQHNRPRWEATHNCPCLRDLQPDQARRPDYAVFMLKYFMCLVVGITSGVWVWSGKTLESWRSLCTRCCWASKGAAVGGGAGATAAGGGGGPGGGGGGGPGGGGGPGGGGGSLYSDVSTGLTWRSGTASSVSYPKQMPLSQV.

The N-terminal stretch at Met1–Ala27 is a signal peptide. The Extracellular segment spans residues Ala28–Ala275. The region spanning Ala30–Tyr151 is the FZ domain. Disulfide bonds link Cys35-Cys96, Cys43-Cys89, Cys80-Cys118, Cys107-Cys148, and Cys111-Cys135. N-linked (GlcNAc...) asparagine glycosylation occurs at Asn49. A hexadecanoate-binding site is contributed by Gln71–Ile78. The tract at residues Ile95–Tyr100 is wnt-binding. Residues Leu147–Asn152 form a wnt-binding region. N-linked (GlcNAc...) asparagine glycosylation is present at Asn152. Positions Asp155 to Ala226 are disordered. Pro residues predominate over residues Pro161–Gln175. Over residues Pro176–Pro186 the composition is skewed to low complexity. A compositionally biased stretch (gly residues) spans Arg210–Ala225. A helical membrane pass occupies residues Phe276–Val296. At Ser297 to Pro312 the chain is on the cytoplasmic side. A helical transmembrane segment spans residues Ile313–Ala333. Topologically, residues Gly334–Cys396 are extracellular. Residues Thr397–Leu417 traverse the membrane as a helical segment. Residues Ser418–Gln439 are Cytoplasmic-facing. A helical membrane pass occupies residues Tyr440–Ser460. Topologically, residues Ser461 to Gly483 are extracellular. Asn475 carries an N-linked (GlcNAc...) asparagine glycan. Residues Phe484–Phe504 traverse the membrane as a helical segment. Over Val505–Arg532 the chain is Cytoplasmic. A helical transmembrane segment spans residues Leu533–Tyr553. The Extracellular segment spans residues Glu554–Ala584. A helical transmembrane segment spans residues Val585–Trp605. Over Ser606–Val694 the chain is Cytoplasmic. Positions Lys608–Trp613 match the Lys-Thr-X-X-X-Trp motif, mediates interaction with the PDZ domain of Dvl family members motif. Over residues Gly648–Ser664 the composition is skewed to gly residues. Positions Gly648–Asp668 are disordered. Residues Ser692 to Val694 carry the PDZ-binding motif.

Belongs to the G-protein coupled receptor Fz/Smo family. Component of a Wnt-signaling complex that contains a WNT protein, a FZD protein and LRP5 or LRP6. Interacts directly with LRP5 or LRP6; the interaction is promoted by Wnt-binding and signaling and inhibited by DKK1. Interacts with GPOC, RSPO1 and RSPO3. Interacts with glypican GPC3. Post-translationally, ubiquitinated by ZNRF3, leading to its degradation by the proteasome. As to expression, most abundant in fetal kidney, followed by brain and lung. In adult tissues, expressed in kidney, heart, pancreas and skeletal muscle.

The protein localises to the membrane. Its subcellular location is the golgi apparatus. It is found in the cell membrane. Functionally, receptor for Wnt proteins. Component of the Wnt-Fzd-LRP5-LRP6 complex that triggers beta-catenin signaling through inducing aggregation of receptor-ligand complexes into ribosome-sized signalosomes. The beta-catenin canonical signaling pathway leads to the activation of disheveled proteins, inhibition of GSK-3 kinase, nuclear accumulation of beta-catenin and activation of Wnt target genes. A second signaling pathway involving PKC and calcium fluxes has been seen for some family members, but it is not yet clear if it represents a distinct pathway or if it can be integrated in the canonical pathway, as PKC seems to be required for Wnt-mediated inactivation of GSK-3 kinase. Both pathways seem to involve interactions with G-proteins. May be involved in transduction and intercellular transmission of polarity information during tissue morphogenesis and/or in differentiated tissues. Coreceptor along with RYK of Wnt proteins, such as WNT1. The sequence is that of Frizzled-8 (FZD8) from Homo sapiens (Human).